Here is an 890-residue protein sequence, read N- to C-terminus: Translation initiation factor IF-2 (890 aa).

Residues 45-304 (LIDHLNQKNS…LQQGFQKPAQ (260 aa)) form a disordered region. Residues 67 to 81 (STLNIPGTGGKSKSV) show a composition bias toward polar residues. The segment covering 92-217 (VKRDPQEAER…RMAEENKWID (126 aa)) has biased composition (basic and acidic residues). The span at 252-266 (GRGRNAKAARPKKGN) shows a compositional bias: basic residues. Positions 267–280 (KHAESKADREEARA) are enriched in basic and acidic residues. The 170-residue stretch at 389-558 (PRAPVVTIMG…LLQAEVLELK (170 aa)) folds into the tr-type G domain. The tract at residues 398-405 (GHVDHGKT) is G1. 398–405 (GHVDHGKT) contributes to the GTP binding site. The segment at 423-427 (GITQH) is G2. Positions 444 to 447 (DTPG) are G3. Residues 444–448 (DTPGH) and 498–501 (NKID) contribute to the GTP site. Positions 498–501 (NKID) are G4. A G5 region spans residues 534–536 (SAK). K808 bears the N6-acetyllysine mark.

The protein belongs to the TRAFAC class translation factor GTPase superfamily. Classic translation factor GTPase family. IF-2 subfamily.

The protein resides in the cytoplasm. Functionally, one of the essential components for the initiation of protein synthesis. Protects formylmethionyl-tRNA from spontaneous hydrolysis and promotes its binding to the 30S ribosomal subunits. Also involved in the hydrolysis of GTP during the formation of the 70S ribosomal complex. The sequence is that of Translation initiation factor IF-2 from Escherichia coli O81 (strain ED1a).